The primary structure comprises 538 residues: ATP synthase subunit alpha, mitochondrial (538 aa).

ATP is bound at residue 197–204 (GDRQTGKT). The interval 228–248 (FCIYVAVGQKRSTVAQIVKRL) is essential and sufficient for enterobactin binding.

The protein belongs to the ATPase alpha/beta chains family. Subunit of the F-type ATPase which has 2 components, CF(1) - the catalytic core - and CF(0) - the membrane proton channel. As to expression, ubiquitous (at protein level).

Its subcellular location is the mitochondrion. It localises to the mitochondrion inner membrane. Its function is as follows. Mitochondrial membrane ATP synthase (F(1)F(0) ATP synthase or Complex V) produces ATP from ADP in the presence of a proton gradient across the membrane which is generated by electron transport complexes of the respiratory chain. F-type ATPases consist of two structural domains, F(1) - containing the extramembraneous catalytic core, and F(0) - containing the membrane proton channel, linked together by a central stalk and a peripheral stalk. During catalysis, ATP synthesis in the catalytic domain of F(1) is coupled via a rotary mechanism of the central stalk subunits to proton translocation. Subunits alpha and beta form the catalytic core in F(1). Rotation of the central stalk against the surrounding subunits leads to hydrolysis of ATP in three separate catalytic sites on the beta subunits. Subunit alpha does not bear the catalytic high-affinity ATP-binding sites. Binds the bacterial siderophore enterobactin and is required for the assimilation of enterobactin-bound iron from non-pathogenic bacteria. Promotes mitochondrial accumulation of enterobactin-derived iron ions. This is ATP synthase subunit alpha, mitochondrial from Caenorhabditis elegans.